Reading from the N-terminus, the 94-residue chain is Small ribosomal subunit protein bS6 (94 aa).

It belongs to the bacterial ribosomal protein bS6 family.

Its function is as follows. Binds together with bS18 to 16S ribosomal RNA. The polypeptide is Small ribosomal subunit protein bS6 (Clostridium botulinum (strain Loch Maree / Type A3)).